We begin with the raw amino-acid sequence, 557 residues long: Putative glutathione-regulated potassium-efflux system protein KefB (557 aa).

10 helical membrane-spanning segments follow: residues 2-22, 24-44, 56-76, 84-104, 121-141, 146-166, 176-196, 199-219, 237-257, and 260-280; these read LGYL…ISDV, EILH…GLEL, IFGV…GLLM, AAVV…LQLM, VLLF…LLAG, HFDW…LIGG, FIAA…LVLG, LFMD…GVLL, GLLL…GVLY, and LLWV…VLYL. One can recognise an RCK N-terminal domain in the interval 356–475; that stretch reads KPQVIVVGFG…AGVTQFSRET (120 aa).

Belongs to the monovalent cation:proton antiporter 2 (CPA2) transporter (TC 2.A.37) family. KefB subfamily. As to quaternary structure, interacts with the regulatory subunit KefG.

The protein localises to the cell inner membrane. Its function is as follows. Pore-forming subunit of a potassium efflux system that confers protection against electrophiles. Catalyzes K(+)/H(+) antiport. In Shigella flexneri, this protein is Putative glutathione-regulated potassium-efflux system protein KefB.